The chain runs to 519 residues: 2-isopropylmalate synthase (519 aa).

Positions 12 to 274 (VVIFDTTLRD…WCNVESTTLT (263 aa)) constitute a Pyruvate carboxyltransferase domain. Residues Asp-21, His-209, His-211, and Asn-245 each coordinate Mn(2+). The regulatory domain stretch occupies residues 398–519 (RLVSLTVIAG…QREAPVAAAS (122 aa)).

The protein belongs to the alpha-IPM synthase/homocitrate synthase family. LeuA type 1 subfamily. Homodimer. Mn(2+) is required as a cofactor.

It localises to the cytoplasm. It catalyses the reaction 3-methyl-2-oxobutanoate + acetyl-CoA + H2O = (2S)-2-isopropylmalate + CoA + H(+). Its pathway is amino-acid biosynthesis; L-leucine biosynthesis; L-leucine from 3-methyl-2-oxobutanoate: step 1/4. In terms of biological role, catalyzes the condensation of the acetyl group of acetyl-CoA with 3-methyl-2-oxobutanoate (2-ketoisovalerate) to form 3-carboxy-3-hydroxy-4-methylpentanoate (2-isopropylmalate). This Afipia carboxidovorans (strain ATCC 49405 / DSM 1227 / KCTC 32145 / OM5) (Oligotropha carboxidovorans) protein is 2-isopropylmalate synthase.